We begin with the raw amino-acid sequence, 219 residues long: Ribose-5-phosphate isomerase A (219 aa).

Residues 28 to 31 (TGST), 81 to 84 (DGAD), and 94 to 97 (KGGG) each bind substrate. The active-site Proton acceptor is the E103. Position 121 (K121) interacts with substrate.

The protein belongs to the ribose 5-phosphate isomerase family. Homodimer.

It carries out the reaction aldehydo-D-ribose 5-phosphate = D-ribulose 5-phosphate. Its pathway is carbohydrate degradation; pentose phosphate pathway; D-ribose 5-phosphate from D-ribulose 5-phosphate (non-oxidative stage): step 1/1. Catalyzes the reversible conversion of ribose-5-phosphate to ribulose 5-phosphate. This chain is Ribose-5-phosphate isomerase A, found in Salmonella arizonae (strain ATCC BAA-731 / CDC346-86 / RSK2980).